A 635-amino-acid polypeptide reads, in one-letter code: MINISFPDGSVKQFEKNITAFEIAVVISTSLAKAAMIAEINGDLKDLSTQIDNDCRLRILTAKDPECLEVIRHDAAHLTAEAVKELFPETQVTIGPAIENGYYYDFARDKPFTTDDLAVIEAKMHELAKKNEKVTRELWDREKAVEFFKSIGEHYKAEIIASIPSNEPISLYRQGNFIDLCRGPHAPSTGFVKHFKLMKVAGAYWRGDSRNEVLQRIYGTAWATKEQLESYLFMLEEAEKRDHRKLGKELDLFHFQEEAQGMVFWHDKGWSVYNTIEQYIRRKIRKNGYIEVKTPVLVDKSLWELSGHWEKFRDDMFALETDDKTLALKPMNCPCHVQIFKQGIKSYRDLPLRMSEFGLCHRNEASGALHGLMRVRSLVQDDAHIFCAEEQITDETVSFCKLLTEVYKDFGFTDIKVKFSDRPEVRAGSSETWDKAENALKEAVEKAGYSYTLNPGEGAFYGPKLEFVLTDAIGRQWQCGTLQMDFVLPERLDASYVAASGEKKRPVMLHRAILGSLERFIGILIEEYAGRFPLWLAPVQVAIATITSDLNDYALEVQKALIESGVRVDINISPDKINYKIREFSNQKVPMIAVIGKQEKENKQVTIRRLGTTEQEVLSIEQLIEYIREENSKYI.

In terms of domain architecture, TGS spans 1-61 (MINISFPDGS…DNDCRLRILT (61 aa)). A catalytic region spans residues 242-533 (DHRKLGKELD…LIEEYAGRFP (292 aa)). Positions 333, 384, and 510 each coordinate Zn(2+).

It belongs to the class-II aminoacyl-tRNA synthetase family. As to quaternary structure, homodimer. The cofactor is Zn(2+).

The protein localises to the cytoplasm. It carries out the reaction tRNA(Thr) + L-threonine + ATP = L-threonyl-tRNA(Thr) + AMP + diphosphate + H(+). Catalyzes the attachment of threonine to tRNA(Thr) in a two-step reaction: L-threonine is first activated by ATP to form Thr-AMP and then transferred to the acceptor end of tRNA(Thr). Also edits incorrectly charged L-seryl-tRNA(Thr). The protein is Threonine--tRNA ligase of Rickettsia bellii (strain RML369-C).